The following is a 156-amino-acid chain: Endogenous retrovirus group K member 8 Pro protein (156 aa).

The Peptidase A2 domain occupies 21–96 (FEGLVDTGAD…IPLNLWGRDL (76 aa)). D26 is an active-site residue. Residues 111-156 (YSPTSQKIMTKRGYIPGKGLGKNEDGIKIPFEAKINQKREGIGYPF) enclose the G-patch domain.

This sequence belongs to the peptidase A2 family. HERV class-II K(HML-2) subfamily. In terms of assembly, active as a homodimer. In terms of processing, autoproteolytically processed at the N-terminus. Expected C-terminal autoprocessing not detected. The sequence shown is that of the processed Pro protein.

It carries out the reaction Processing at the authentic HIV-1 PR recognition site and release of the mature p17 matrix and the p24 capsid protein, as a result of the cleavage of the -SQNY-|-PIVQ- cleavage site.. Functionally, retroviral proteases have roles in the processing of the primary translation products and the maturation of the viral particle. Endogenous Pro proteins may have kept, lost or modified their original function during evolution. This chain is Endogenous retrovirus group K member 8 Pro protein (ERVK-8), found in Homo sapiens (Human).